Here is a 390-residue protein sequence, read N- to C-terminus: 23S rRNA (uracil(747)-C(5))-methyltransferase RlmC (390 aa).

[4Fe-4S] cluster contacts are provided by Cys12, Cys20, Cys23, and Cys100. S-adenosyl-L-methionine contacts are provided by Gln225, Phe254, Glu275, and Asn322. Cys349 serves as the catalytic Nucleophile.

The protein belongs to the class I-like SAM-binding methyltransferase superfamily. RNA M5U methyltransferase family. RlmC subfamily.

The catalysed reaction is uridine(747) in 23S rRNA + S-adenosyl-L-methionine = 5-methyluridine(747) in 23S rRNA + S-adenosyl-L-homocysteine + H(+). Catalyzes the formation of 5-methyl-uridine at position 747 (m5U747) in 23S rRNA. This is 23S rRNA (uracil(747)-C(5))-methyltransferase RlmC from Shewanella baltica (strain OS185).